Here is a 189-residue protein sequence, read N- to C-terminus: uncharacterized protein (189 aa).

The protein belongs to the flavoredoxin family. Requires FMN as cofactor.

This is an uncharacterized protein from Escherichia coli (strain K12).